The sequence spans 365 residues: Probable protein kinase At2g41970 (365 aa).

The disordered stretch occupies residues Met-1 to Pro-50. One can recognise a Protein kinase domain in the interval Phe-73–Leu-354. Residues Ile-79–Val-87 and Lys-100 each bind ATP. Residue Tyr-146 is modified to Phosphotyrosine. The active-site Proton acceptor is Asp-204. Phosphoserine occurs at positions 208 and 238. A phosphothreonine mark is found at Thr-239 and Thr-244. Phosphotyrosine is present on Tyr-252.

It belongs to the protein kinase superfamily. Tyr protein kinase family.

In Arabidopsis thaliana (Mouse-ear cress), this protein is Probable protein kinase At2g41970.